We begin with the raw amino-acid sequence, 211 residues long: Imidazole glycerol phosphate synthase subunit HisH (211 aa).

A Glutamine amidotransferase type-1 domain is found at 1–206 (MIGIIDYGRG…GKWVNEDATV (206 aa)). Residue Cys-79 is the Nucleophile of the active site. Active-site residues include His-181 and Glu-183.

In terms of assembly, heterodimer of HisH and HisF.

Its subcellular location is the cytoplasm. The enzyme catalyses 5-[(5-phospho-1-deoxy-D-ribulos-1-ylimino)methylamino]-1-(5-phospho-beta-D-ribosyl)imidazole-4-carboxamide + L-glutamine = D-erythro-1-(imidazol-4-yl)glycerol 3-phosphate + 5-amino-1-(5-phospho-beta-D-ribosyl)imidazole-4-carboxamide + L-glutamate + H(+). It catalyses the reaction L-glutamine + H2O = L-glutamate + NH4(+). The protein operates within amino-acid biosynthesis; L-histidine biosynthesis; L-histidine from 5-phospho-alpha-D-ribose 1-diphosphate: step 5/9. In terms of biological role, IGPS catalyzes the conversion of PRFAR and glutamine to IGP, AICAR and glutamate. The HisH subunit catalyzes the hydrolysis of glutamine to glutamate and ammonia as part of the synthesis of IGP and AICAR. The resulting ammonia molecule is channeled to the active site of HisF. This is Imidazole glycerol phosphate synthase subunit HisH from Desulfitobacterium hafniense (strain DSM 10664 / DCB-2).